A 539-amino-acid polypeptide reads, in one-letter code: Chaperonin GroEL (539 aa).

ATP contacts are provided by residues 30–33, Lys51, 87–91, Gly415, 479–481, and Asp495; these read TLGP, DGTTT, and NAA.

It belongs to the chaperonin (HSP60) family. Forms a cylinder of 14 subunits composed of two heptameric rings stacked back-to-back. Interacts with the co-chaperonin GroES.

It localises to the cytoplasm. It catalyses the reaction ATP + H2O + a folded polypeptide = ADP + phosphate + an unfolded polypeptide.. In terms of biological role, together with its co-chaperonin GroES, plays an essential role in assisting protein folding. The GroEL-GroES system forms a nano-cage that allows encapsulation of the non-native substrate proteins and provides a physical environment optimized to promote and accelerate protein folding. In Enterobacter asburiae, this protein is Chaperonin GroEL.